Here is a 77-residue protein sequence, read N- to C-terminus: Acyl carrier protein (77 aa).

Residues 2 to 77 (SDVAKRVKEI…DAIDYITEHT (76 aa)) form the Carrier domain. Residue S37 is modified to O-(pantetheine 4'-phosphoryl)serine.

This sequence belongs to the acyl carrier protein (ACP) family. Post-translationally, 4'-phosphopantetheine is transferred from CoA to a specific serine of apo-ACP by AcpS. This modification is essential for activity because fatty acids are bound in thioester linkage to the sulfhydryl of the prosthetic group.

It localises to the cytoplasm. The protein operates within lipid metabolism; fatty acid biosynthesis. Carrier of the growing fatty acid chain in fatty acid biosynthesis. This is Acyl carrier protein from Trichlorobacter lovleyi (strain ATCC BAA-1151 / DSM 17278 / SZ) (Geobacter lovleyi).